The chain runs to 245 residues: DNA repair protein RecO (245 aa).

The protein belongs to the RecO family.

Functionally, involved in DNA repair and RecF pathway recombination. The polypeptide is DNA repair protein RecO (Erwinia tasmaniensis (strain DSM 17950 / CFBP 7177 / CIP 109463 / NCPPB 4357 / Et1/99)).